We begin with the raw amino-acid sequence, 409 residues long: Tetracenomycin polyketide synthase ketoacyl synthase beta subunit (409 aa).

Residues 4 to 407 (PAPVVVTGLG…GFNSALVVRR (404 aa)) enclose the Ketosynthase family 3 (KS3) domain.

The protein belongs to the thiolase-like superfamily. Beta-ketoacyl-ACP synthases family. In terms of assembly, the tetracenomycin polyketide synthase (TCM PKS) is composed of a ketosynthase complex (TcmKL), an acyl carrier protein (TcmM), a cyclase (TcmN) and a probable second cyclase (TcmJ). TcmK and TcmL form a heterodimeric complex.

It catalyses the reaction 10 malonyl-CoA + 8 H(+) = tetracenomycin F2 + 10 CO2 + 10 CoA + 2 H2O. It functions in the pathway antibiotic biosynthesis; tetracenomycin C biosynthesis. In terms of biological role, involved in the biosynthesis of tetracenomycin C (TCM C). Part of a type II polyketide synthase (PKS) that catalyzes the synthesis of tetracenomycin F2 (TCM F2), a precursor of TCM C, from malonyl-CoA. TcmK and TcmL form a heterodimeric alpha-beta complex that catalyzes the condensation reactions between the growing acyl-enzyme chain and the malonyl-CoA extender units. The protein is Tetracenomycin polyketide synthase ketoacyl synthase beta subunit of Streptomyces glaucescens.